The following is a 229-amino-acid chain: Large ribosomal subunit protein uL1 (229 aa).

This sequence belongs to the universal ribosomal protein uL1 family. As to quaternary structure, part of the 50S ribosomal subunit.

Binds directly to 23S rRNA. The L1 stalk is quite mobile in the ribosome, and is involved in E site tRNA release. Its function is as follows. Protein L1 is also a translational repressor protein, it controls the translation of the L11 operon by binding to its mRNA. The sequence is that of Large ribosomal subunit protein uL1 from Ureaplasma urealyticum serovar 10 (strain ATCC 33699 / Western).